A 422-amino-acid chain; its full sequence is Acylglycerol kinase, mitochondrial (422 aa).

An N6-acetyllysine modification is found at K6. The hydrophobic stretch occupies residues 15 to 31 (TTAGLCLLTWGGHWLYG). The region spanning 58-199 (AQVKKATVFL…LDVLQIKGEK (142 aa)) is the DAGKc domain. The interval 249–271 (QASISYTGPTERPPSEPEETPVQ) is disordered.

This sequence belongs to the AGK family. As to quaternary structure, component of the TIM22 complex, which core is composed of TIMM22, associated with TIMM10 (TIMM10A and/or TIMM10B), TIMM9, AGK and TIMM29. Interacts with SMIM26. It depends on Mg(2+) as a cofactor.

It is found in the mitochondrion inner membrane. The protein resides in the mitochondrion intermembrane space. The enzyme catalyses a monoacylglycerol + ATP = a monoacyl-sn-glycero-3-phosphate + ADP + H(+). The catalysed reaction is a 1,2-diacyl-sn-glycerol + ATP = a 1,2-diacyl-sn-glycero-3-phosphate + ADP + H(+). It carries out the reaction an N-acylsphing-4-enine + ATP = an N-acylsphing-4-enine 1-phosphate + ADP + H(+). It catalyses the reaction 1-(9Z-octadecenoyl)-sn-glycerol + ATP = 1-(9Z-octadecenoyl)-sn-glycero-3-phosphate + ADP + H(+). The enzyme catalyses 1,2-di-(9Z-octadecenoyl)-sn-glycerol + ATP = 1,2-di-(9Z-octadecenoyl)-sn-glycero-3-phosphate + ADP + H(+). The catalysed reaction is a 1-acyl-sn-glycerol + ATP = a 1-acyl-sn-glycero-3-phosphate + ADP + H(+). It carries out the reaction 1-hexadecanoyl-sn-glycerol + ATP = 1-hexadecanoyl-sn-glycero-3-phosphate + ADP + H(+). It catalyses the reaction a 2-acylglycerol + ATP = a 2-acyl-sn-glycerol 3-phosphate + ADP + H(+). The enzyme catalyses 2-(5Z,8Z,11Z,14Z-eicosatetraenoyl)-glycerol + ATP = 2-(5Z,8Z,11Z,14Z-eicosatetraenoyl)-sn-glycero-3-phosphate + ADP + H(+). The catalysed reaction is 1-(5Z,8Z,11Z,14Z-eicosatetraenoyl)-sn-glycerol + ATP = 1-(5Z,8Z,11Z,14Z-eicosatetraenoyl)-sn-glycero-3-phosphate + ADP + H(+). It carries out the reaction N-(hexanoyl)sphing-4-enine + ATP = N-hexanoylsphing-4-enine 1-phosphate + ADP + H(+). It participates in lipid metabolism; glycerolipid metabolism. In terms of biological role, lipid kinase that can phosphorylate both monoacylglycerol and diacylglycerol to form lysophosphatidic acid (LPA) and phosphatidic acid (PA), respectively. Phosphorylates ceramide but not sphingosine. Phosphorylates 1,2-dioleoylglycerol more rapidly than 2,3-dioleoylglycerol. Independently of its lipid kinase activity, acts as a component of the TIM22 complex. The TIM22 complex mediates the import and insertion of multi-pass transmembrane proteins into the mitochondrial inner membrane by forming a twin-pore translocase that uses the membrane potential as the external driving force. In the TIM22 complex, required for the import of a subset of metabolite carriers into mitochondria, such as ANT1/SLC25A4 and SLC25A24, while it is not required for the import of TIMM23. Overexpression increases the formation and secretion of LPA, resulting in transactivation of EGFR and activation of the downstream MAPK signaling pathway, leading to increased cell growth. This chain is Acylglycerol kinase, mitochondrial, found in Pongo abelii (Sumatran orangutan).